The sequence spans 734 residues: Photosystem I P700 chlorophyll a apoprotein A2 (734 aa).

The next 8 helical transmembrane spans lie at 46-69, 135-158, 175-199, 273-291, 330-353, 369-395, 417-439, and 517-535; these read IFAS…FHVA, LYTG…LHLQ, LNHH…HVAI, IAHH…GHMY, VHFQ…QHMY, AALY…IFFI, AIIS…LYVH, and FLVH…LILV. [4Fe-4S] cluster is bound by residues C559 and C568. The next 2 helical transmembrane spans lie at 575–596 and 643–665; these read AFYL…YWHW and LSVW…MFLI. Chlorophyll a contacts are provided by H654, M662, and Y670. W671 provides a ligand contact to phylloquinone. Residues 707-727 form a helical membrane-spanning segment; sequence LVGLAHFSVGYIFTYAAFLIA.

The protein belongs to the PsaA/PsaB family. As to quaternary structure, the PsaA/B heterodimer binds the P700 chlorophyll special pair and subsequent electron acceptors. PSI consists of a core antenna complex that captures photons, and an electron transfer chain that converts photonic excitation into a charge separation. The eukaryotic PSI reaction center is composed of at least 11 subunits. It depends on P700 is a chlorophyll a/chlorophyll a' dimer, A0 is one or more chlorophyll a, A1 is one or both phylloquinones and FX is a shared 4Fe-4S iron-sulfur center. as a cofactor.

It is found in the plastid. It localises to the chloroplast thylakoid membrane. The catalysed reaction is reduced [plastocyanin] + hnu + oxidized [2Fe-2S]-[ferredoxin] = oxidized [plastocyanin] + reduced [2Fe-2S]-[ferredoxin]. PsaA and PsaB bind P700, the primary electron donor of photosystem I (PSI), as well as the electron acceptors A0, A1 and FX. PSI is a plastocyanin-ferredoxin oxidoreductase, converting photonic excitation into a charge separation, which transfers an electron from the donor P700 chlorophyll pair to the spectroscopically characterized acceptors A0, A1, FX, FA and FB in turn. Oxidized P700 is reduced on the lumenal side of the thylakoid membrane by plastocyanin. The sequence is that of Photosystem I P700 chlorophyll a apoprotein A2 from Platanus occidentalis (Sycamore).